A 474-amino-acid polypeptide reads, in one-letter code: tRNA-2-methylthio-N(6)-dimethylallyladenosine synthase (474 aa).

The MTTase N-terminal domain occupies 3-120 (KKLHIKTWGC…LPEMINHVQG (118 aa)). [4Fe-4S] cluster contacts are provided by Cys-12, Cys-49, Cys-83, Cys-157, Cys-161, and Cys-164. The Radical SAM core domain maps to 143–375 (RAEGPTAFVS…QQRISQQAME (233 aa)). One can recognise a TRAM domain in the interval 378 to 441 (RKMVGTVQRV…ASSLRGILLR (64 aa)).

Belongs to the methylthiotransferase family. MiaB subfamily. As to quaternary structure, monomer. Requires [4Fe-4S] cluster as cofactor.

The protein localises to the cytoplasm. It catalyses the reaction N(6)-dimethylallyladenosine(37) in tRNA + (sulfur carrier)-SH + AH2 + 2 S-adenosyl-L-methionine = 2-methylsulfanyl-N(6)-dimethylallyladenosine(37) in tRNA + (sulfur carrier)-H + 5'-deoxyadenosine + L-methionine + A + S-adenosyl-L-homocysteine + 2 H(+). Functionally, catalyzes the methylthiolation of N6-(dimethylallyl)adenosine (i(6)A), leading to the formation of 2-methylthio-N6-(dimethylallyl)adenosine (ms(2)i(6)A) at position 37 in tRNAs that read codons beginning with uridine. The polypeptide is tRNA-2-methylthio-N(6)-dimethylallyladenosine synthase (Yersinia pseudotuberculosis serotype O:1b (strain IP 31758)).